The primary structure comprises 453 residues: Exodeoxyribonuclease 7 large subunit (453 aa).

The protein belongs to the XseA family. Heterooligomer composed of large and small subunits.

It is found in the cytoplasm. It catalyses the reaction Exonucleolytic cleavage in either 5'- to 3'- or 3'- to 5'-direction to yield nucleoside 5'-phosphates.. Functionally, bidirectionally degrades single-stranded DNA into large acid-insoluble oligonucleotides, which are then degraded further into small acid-soluble oligonucleotides. This is Exodeoxyribonuclease 7 large subunit from Geobacter metallireducens (strain ATCC 53774 / DSM 7210 / GS-15).